The sequence spans 234 residues: Large ribosomal subunit protein uL1 (234 aa).

This sequence belongs to the universal ribosomal protein uL1 family. In terms of assembly, part of the 50S ribosomal subunit.

Functionally, binds directly to 23S rRNA. The L1 stalk is quite mobile in the ribosome, and is involved in E site tRNA release. Its function is as follows. Protein L1 is also a translational repressor protein, it controls the translation of the L11 operon by binding to its mRNA. This is Large ribosomal subunit protein uL1 from Pectobacterium carotovorum subsp. carotovorum (strain PC1).